We begin with the raw amino-acid sequence, 1544 residues long: Zinc finger protein GLI2 (1544 aa).

The segment at 1-26 (METSAPAPALEKKEAKSGLLEDSSFP) is disordered. Phosphoserine is present on residues S145, S230, S232, and S238. The disordered stretch occupies residues 338 to 364 (SSSSSNCLNDANQNKQNSESAVSSTVN). S385 is subject to Phosphoserine; by DYRK2. The C2H2-type 1 zinc finger occupies 417–444 (TNCHWADCTKEYDTQEQLVHHINNEHIH). Residues 455-477 (QACTREQKPFKAQYMLVVHMRRH) form a C2H2-type 2; degenerate zinc finger. 3 C2H2-type zinc fingers span residues 483-507 (HKCT…LRSH), 513-538 (YVCE…NRTH), and 544-569 (YICK…KTVH). 2 disordered regions span residues 557-619 (DPSS…TSHT) and 635-682 (GLCQ…ALAD). Positions 569-585 (HGPDAHVTKKQRNDVHV) are enriched in basic and acidic residues. Residues 637-657 (CQSSPGAQSSCSSEPSPLGSA) show a composition bias toward low complexity. S707 carries the phosphoserine modification. T708 carries the phosphothreonine modification. K740 carries the N6-acetyllysine; by EP300 modification. 6 disordered regions span residues 781–800 (SQLQ…AYTV), 805–861 (SGIS…PGLL), 908–963 (ALPG…RRPD), 995–1016 (VQSH…RPPS), 1166–1220 (FGQY…CLGM), and 1422–1457 (GGCP…VSST). 2 stretches are compositionally biased toward polar residues: residues 790-800 (STSTMSSAYTV) and 805-814 (SGISPYFSSR). Positions 954-963 (RASDPVRRPD) are enriched in basic and acidic residues. S997 bears the Phosphoserine; by DYRK2 mark. Polar residues-rich tracts occupy residues 997–1009 (SHPS…TRNA), 1173–1190 (NPQS…TQPH), and 1200–1209 (SRGSYTQQPR).

It belongs to the GLI C2H2-type zinc-finger protein family. In terms of assembly, interacts with ZIC1 and ZIC2. Interacts with STK36. Interacts with SUFU; this inhibits transcriptional activation mediated by GLI2. Interacts (via C-terminal internal region) with FOXC1 (via N-terminus); this interaction is direct and increases GLI2 DNA-binding and transcriptional activity through a smoothened (SMO)-independent Hedgehog (Hh) signaling pathway. Post-translationally, phosphorylated in vitro by ULK3. Phosphorylated by DYRK2; this inhibits GLI2 transcription factor activity and promotes proteasomal degradation of GLI2. Acetylation at Lys-740 inhibits Hh target gene expression, probably by impeding entry into chromatin thus preventing promoter occupancy.

It localises to the nucleus. It is found in the cytoplasm. The protein resides in the cell projection. Its subcellular location is the cilium. Its function is as follows. Functions as a transcription regulator in the hedgehog (Hh) pathway. Functions as a transcriptional activator. May also function as transcriptional repressor. Requires STK36 for full transcriptional activator activity. Binds to the DNA sequence 5'-GAACCACCCA-3' which is part of the TRE-2S regulatory element. Is involved in the smoothened (SHH) signaling pathway. Required for normal skeleton development. The polypeptide is Zinc finger protein GLI2 (Mus musculus (Mouse)).